A 495-amino-acid polypeptide reads, in one-letter code: Ectonucleoside triphosphate diphosphohydrolase 2 (495 aa).

Over 1 to 4 the chain is Cytoplasmic; it reads MAGK. A helical transmembrane segment spans residues 5 to 25; it reads LVSLVPPLLLAAAGLTGLLLL. The Extracellular segment spans residues 26 to 462; it reads CVPTQDVREP…PGLRKGTHFS (437 aa). Asn64 carries an N-linked (GlcNAc...) asparagine glycan. Cys75 and Cys99 form a disulfide bridge. N-linked (GlcNAc...) asparagine glycosylation is present at Asn129. Glu165 (proton acceptor) is an active-site residue. Position 204 to 208 (204 to 208) interacts with ATP; it reads GASTQ. 2 disulfides stabilise this stretch: Cys242–Cys284 and Cys265–Cys310. N-linked (GlcNAc...) asparagine glycosylation is found at Asn294, Asn306, and Asn319. Intrachain disulfides connect Cys323–Cys328 and Cys377–Cys399. 2 N-linked (GlcNAc...) asparagine glycosylation sites follow: Asn378 and Asn443. The helical transmembrane segment at 463-483 threads the bilayer; the sequence is SWVALLLLFTVLILAALVLLL. Topologically, residues 484-495 are cytoplasmic; that stretch reads RQVRSAKSPGAL.

The protein belongs to the GDA1/CD39 NTPase family. The cofactor is Ca(2+). Mg(2+) serves as cofactor. In terms of tissue distribution, expressed in brain, heart, vas deferens, kidney, skeletal muscle, thymus, lung and spleen. Weak expression in liver.

It localises to the cell membrane. In terms of biological role, in the nervous system, could hydrolyze ATP and other nucleotides to regulate purinergic neurotransmission. Hydrolyzes ADP only to a marginal extent. This chain is Ectonucleoside triphosphate diphosphohydrolase 2 (Entpd2), found in Rattus norvegicus (Rat).